The chain runs to 221 residues: uncharacterized protein (221 aa).

Residues Met1–Pro16 are compositionally biased toward basic and acidic residues. A disordered region spans residues Met1–Arg64.

This is an uncharacterized protein from Homo sapiens (Human).